The following is a 277-amino-acid chain: NADPH-dependent 7-cyano-7-deazaguanine reductase (277 aa).

83-85 (VES) serves as a coordination point for substrate. 85–86 (SK) is a binding site for NADPH. Cys184 serves as the catalytic Thioimide intermediate. Asp191 acts as the Proton donor in catalysis. 223 to 224 (HE) provides a ligand contact to substrate. NADPH is bound at residue 252–253 (RG).

This sequence belongs to the GTP cyclohydrolase I family. QueF type 2 subfamily. In terms of assembly, homodimer.

Its subcellular location is the cytoplasm. It catalyses the reaction 7-aminomethyl-7-carbaguanine + 2 NADP(+) = 7-cyano-7-deazaguanine + 2 NADPH + 3 H(+). It participates in tRNA modification; tRNA-queuosine biosynthesis. Catalyzes the NADPH-dependent reduction of 7-cyano-7-deazaguanine (preQ0) to 7-aminomethyl-7-deazaguanine (preQ1). This Cupriavidus metallidurans (strain ATCC 43123 / DSM 2839 / NBRC 102507 / CH34) (Ralstonia metallidurans) protein is NADPH-dependent 7-cyano-7-deazaguanine reductase.